Consider the following 100-residue polypeptide: NADH-quinone oxidoreductase subunit K (100 aa).

3 helical membrane-spanning segments follow: residues 4–24 (MQHGLILAAILFTLGLTGLLI), 28–48 (LIFMLISLEVMINSAALAWVV), and 60–80 (IFYLLAITLAAAEASIGLALL).

The protein belongs to the complex I subunit 4L family. NDH-1 is composed of 13 different subunits. Subunits NuoA, H, J, K, L, M, N constitute the membrane sector of the complex.

It is found in the cell membrane. It carries out the reaction a quinone + NADH + 5 H(+)(in) = a quinol + NAD(+) + 4 H(+)(out). Functionally, NDH-1 shuttles electrons from NADH, via FMN and iron-sulfur (Fe-S) centers, to quinones in the respiratory chain. The immediate electron acceptor for the enzyme in this species is believed to be ubiquinone. Couples the redox reaction to proton translocation (for every two electrons transferred, four hydrogen ions are translocated across the cytoplasmic membrane), and thus conserves the redox energy in a proton gradient. The polypeptide is NADH-quinone oxidoreductase subunit K (Hamiltonella defensa subsp. Acyrthosiphon pisum (strain 5AT)).